Here is a 608-residue protein sequence, read N- to C-terminus: CTP synthase (608 aa).

The interval 1-271 is amidoligase domain; it reads MGQAHITKHI…DAYVVRRLGL (271 aa). Ser-18 is a binding site for CTP. Ser-18 is a binding site for UTP. ATP is bound by residues 19–24 and Asp-76; that span reads SLGKGL. Mg(2+) is bound by residues Asp-76 and Glu-145. Residues 152–154, 192–197, and Lys-228 each bind CTP; these read DIE and KTKPTQ. UTP-binding positions include 192-197 and Lys-228; that span reads KTKPTQ. The Glutamine amidotransferase type-1 domain maps to 296–545; sequence TIAIVGKYVD…VAAAVAHADR (250 aa). Gly-359 contacts L-glutamine. Catalysis depends on Cys-386, which acts as the Nucleophile; for glutamine hydrolysis. Residues 387-390, Glu-410, and Arg-471 each bind L-glutamine; that span reads LGLQ. Residues His-518 and Glu-520 contribute to the active site. The disordered stretch occupies residues 550–608; sequence LPVDLPSEDAPTPENGVPENGAAQTRGVTAGRSGGSIRRGASASRPSVSSNGTAALVSP. Residues 584 to 594 show a composition bias toward low complexity; it reads GSIRRGASASR.

Belongs to the CTP synthase family. As to quaternary structure, homotetramer.

The catalysed reaction is UTP + L-glutamine + ATP + H2O = CTP + L-glutamate + ADP + phosphate + 2 H(+). It catalyses the reaction L-glutamine + H2O = L-glutamate + NH4(+). It carries out the reaction UTP + NH4(+) + ATP = CTP + ADP + phosphate + 2 H(+). The protein operates within pyrimidine metabolism; CTP biosynthesis via de novo pathway; CTP from UDP: step 2/2. Allosterically activated by GTP, when glutamine is the substrate; GTP has no effect on the reaction when ammonia is the substrate. The allosteric effector GTP functions by stabilizing the protein conformation that binds the tetrahedral intermediate(s) formed during glutamine hydrolysis. Inhibited by the product CTP, via allosteric rather than competitive inhibition. Its function is as follows. Catalyzes the ATP-dependent amination of UTP to CTP with either L-glutamine or ammonia as the source of nitrogen. Regulates intracellular CTP levels through interactions with the four ribonucleotide triphosphates. The protein is CTP synthase of Frankia casuarinae (strain DSM 45818 / CECT 9043 / HFP020203 / CcI3).